Consider the following 704-residue polypeptide: Non-sulfated chondroitin lyase E66 (704 aa).

An N-terminal signal peptide occupies residues 1–23 (MSIVLIIVIVVIFLICFLYLSNS). Active-site proton acceptor residues include Asn236 and His291. The active-site Proton donor is Tyr299.

It belongs to the baculoviridae E66 family.

It is found in the virion membrane. It localises to the host nucleus. The protein localises to the host cytoplasm. Its function is as follows. Component of the polyhedra envelope. Plays an essential role in oral infectivity. May digest, with its chondroitin lyase activity, the chondroitin sulfate barrier of the peritrophic matrix of the host midgut to facilitate viral infection in the epithelial cells. This Lepidoptera (butterflies and moths) protein is Non-sulfated chondroitin lyase E66 (P79).